Reading from the N-terminus, the 129-residue chain is uncharacterized protein (129 aa).

The segment covering 91-114 has biased composition (basic and acidic residues); it reads ASEKVGEMKEAASEKASEMKEAVS. The disordered stretch occupies residues 91-129; the sequence is ASEKVGEMKEAASEKASEMKEAVSEKATQAVDAVKEATK.

The protein belongs to the LEA type 1 family.

This is an uncharacterized protein from Haemophilus influenzae (strain ATCC 51907 / DSM 11121 / KW20 / Rd).